Here is a 52-residue protein sequence, read N- to C-terminus: Large ribosomal subunit protein bL32c (52 aa).

The protein belongs to the bacterial ribosomal protein bL32 family.

Its subcellular location is the plastid. It localises to the chloroplast. This is Large ribosomal subunit protein bL32c from Citrus sinensis (Sweet orange).